The chain runs to 30 residues: Thylakoid lumenal 13.3 kDa protein (30 aa).

The protein resides in the plastid. It is found in the chloroplast thylakoid lumen. This chain is Thylakoid lumenal 13.3 kDa protein, found in Spinacia oleracea (Spinach).